Consider the following 501-residue polypeptide: MFSNQYIQQRIHKANSLREEGKNPYQNGLKRSLTNAAFLEKYAYVKGLEEPKDKEKCESIVGRVKLLRLMGKACFIKVEDESTILQVYVSQNELNDEFKSLKKHLEVGDIVLVKGFPFATKTGELSIHALEFHILSKTIVPLPEKFHGLSDIELRYRQRYLDLIVNPSVKDVFKKRSLIVSSVRKFFEMEGFLEVETPMMHPIPGGANARPFITYHNALEVERYLRIAPELYLKRLIVGGFEAVFEINRNFRNEGMDHSHNPEFTMIEFYWAYHTYEDLIELSKRLFDYLLKTLNLDSKIIYNDMEVDFNQTSVISYLDALETIGGISKDILEKEDRLLAYLLEQGIKVEPNLTYGKLLAEAFDHFVEHQLINPTFVTQYPIEISPLARRNDSNPNIADRFELFIAGKEIANGFSELNDPLDQLERFKNQVAEKEKGDEEAQYMDEDYVWALAHGMPPTAGQGIGIDRLVMLLTGAKSIKDVILFPAMRPVKNDFNVESEE.

Residues glutamate 402 and glutamate 409 each contribute to the Mg(2+) site.

The protein belongs to the class-II aminoacyl-tRNA synthetase family. As to quaternary structure, homodimer. Mg(2+) is required as a cofactor.

It localises to the cytoplasm. It carries out the reaction tRNA(Lys) + L-lysine + ATP = L-lysyl-tRNA(Lys) + AMP + diphosphate. The protein is Lysine--tRNA ligase (lysS) of Helicobacter pylori (strain ATCC 700392 / 26695) (Campylobacter pylori).